Consider the following 305-residue polypeptide: Lipoyl synthase (305 aa).

Residues Cys41, Cys46, Cys52, Cys68, Cys72, Cys75, and Ser281 each coordinate [4Fe-4S] cluster. Residues 54 to 270 (GARRTATFMI…RKVAMDKGFK (217 aa)) form the Radical SAM core domain. Residues 283 to 298 (HADEQVNEAAKEKQRQ) show a composition bias toward basic and acidic residues. A disordered region spans residues 283–305 (HADEQVNEAAKEKQRQGEAQLNS).

It belongs to the radical SAM superfamily. Lipoyl synthase family. Requires [4Fe-4S] cluster as cofactor.

The protein resides in the cytoplasm. It catalyses the reaction [[Fe-S] cluster scaffold protein carrying a second [4Fe-4S](2+) cluster] + N(6)-octanoyl-L-lysyl-[protein] + 2 oxidized [2Fe-2S]-[ferredoxin] + 2 S-adenosyl-L-methionine + 4 H(+) = [[Fe-S] cluster scaffold protein] + N(6)-[(R)-dihydrolipoyl]-L-lysyl-[protein] + 4 Fe(3+) + 2 hydrogen sulfide + 2 5'-deoxyadenosine + 2 L-methionine + 2 reduced [2Fe-2S]-[ferredoxin]. It participates in protein modification; protein lipoylation via endogenous pathway; protein N(6)-(lipoyl)lysine from octanoyl-[acyl-carrier-protein]. Functionally, catalyzes the radical-mediated insertion of two sulfur atoms into the C-6 and C-8 positions of the octanoyl moiety bound to the lipoyl domains of lipoate-dependent enzymes, thereby converting the octanoylated domains into lipoylated derivatives. The chain is Lipoyl synthase from Staphylococcus aureus (strain Mu3 / ATCC 700698).